The sequence spans 187 residues: UPF0340 protein SP_0663 (187 aa).

This sequence belongs to the UPF0340 family.

This chain is UPF0340 protein SP_0663, found in Streptococcus pneumoniae serotype 4 (strain ATCC BAA-334 / TIGR4).